A 236-amino-acid chain; its full sequence is uncharacterized protein (236 aa).

Residues 1 to 73 (MEPGGSENAA…GGGWGWGNTQ (73 aa)) are disordered.

This is an uncharacterized protein from Homo sapiens (Human).